The sequence spans 198 residues: Recombination protein RecR (198 aa).

The C4-type zinc finger occupies Cys59–Cys74. The Toprim domain maps to Thr82 to Pro175.

This sequence belongs to the RecR family.

May play a role in DNA repair. It seems to be involved in an RecBC-independent recombinational process of DNA repair. It may act with RecF and RecO. In Desulfitobacterium hafniense (strain DSM 10664 / DCB-2), this protein is Recombination protein RecR.